The primary structure comprises 592 residues: UvrABC system protein C (592 aa).

Positions 15–92 (ALPGCYLMKD…IQKHQPYFNI (78 aa)) constitute a GIY-YIG domain. One can recognise a UVR domain in the interval 197–232 (DNVKKDLTEKMATAAQEMQFERAAELRDQLRYIEAT).

This sequence belongs to the UvrC family. In terms of assembly, interacts with UvrB in an incision complex.

It localises to the cytoplasm. Functionally, the UvrABC repair system catalyzes the recognition and processing of DNA lesions. UvrC both incises the 5' and 3' sides of the lesion. The N-terminal half is responsible for the 3' incision and the C-terminal half is responsible for the 5' incision. This Latilactobacillus sakei subsp. sakei (strain 23K) (Lactobacillus sakei subsp. sakei) protein is UvrABC system protein C.